The sequence spans 175 residues: Shikimate kinase (175 aa).

14-19 contributes to the ATP binding site; it reads GAGKST. Ser18 contributes to the Mg(2+) binding site. Residues Asp36, Arg60, and Gly82 each contribute to the substrate site. Arg120 contacts ATP. A substrate-binding site is contributed by Arg140. Gln157 contacts ATP.

It belongs to the shikimate kinase family. In terms of assembly, monomer. The cofactor is Mg(2+).

The protein resides in the cytoplasm. It carries out the reaction shikimate + ATP = 3-phosphoshikimate + ADP + H(+). It functions in the pathway metabolic intermediate biosynthesis; chorismate biosynthesis; chorismate from D-erythrose 4-phosphate and phosphoenolpyruvate: step 5/7. Functionally, catalyzes the specific phosphorylation of the 3-hydroxyl group of shikimic acid using ATP as a cosubstrate. The polypeptide is Shikimate kinase (Histophilus somni (strain 2336) (Haemophilus somnus)).